Here is an 837-residue protein sequence, read N- to C-terminus: CoA-transferase/lyase DddD (837 aa).

Asp-602 serves as the catalytic Nucleophile.

This sequence belongs to the CoA-transferase III family.

Dimethyl sulfide (DMS)-producing enzyme. Acts both as a transferase and a lyase: uses acetyl-coenzyme A (acetyl-coA) and dimethylsulfoniopropionate (DMSP) as substrates to produce DMS, acetate and 3-hydroxypropionate-CoA (3HP-CoA). Mediates the CoA-transferase prior to lyase activity. DMS is the principal form by which sulfur is transported from oceans to the atmosphere and is a key component of the ocean sulfur cycle. The chain is CoA-transferase/lyase DddD from Marinomonas sp. (strain MWYL1).